The following is a 104-amino-acid chain: Elicitor peptide 6 (104 aa).

The propeptide occupies 1–81; it reads MEVNGEEERR…TVEETGFMAR (81 aa). The segment covering 48 to 61 has biased composition (low complexity); the sequence is SSSIPPSSSSSSPS. A disordered region spans residues 48–104; the sequence is SSSIPPSSSSSSPSLVEEEDSGTETVEETGFMARITAVLRRRPRPPPYSSGRPGQNN. Acidic residues predominate over residues 63 to 74; it reads VEEEDSGTETVE.

Belongs to the brassicaceae elicitor peptide family.

Functionally, elicitor of plant defense. This Arabidopsis thaliana (Mouse-ear cress) protein is Elicitor peptide 6 (PEP6).